The following is a 444-amino-acid chain: Phosphoribosylamine--glycine ligase (444 aa).

An ATP-grasp domain is found at 109 to 324; sequence RNLFKKYEID…FLDVCFAIAE (216 aa). 140–202 serves as a coordination point for ATP; the sequence is MTSLGKDVVV…EEKLVGVEFT (63 aa). 3 residues coordinate Mg(2+): Q282, E294, and N296. Q282, E294, and N296 together coordinate Mn(2+).

The protein belongs to the GARS family. Mg(2+) serves as cofactor. Mn(2+) is required as a cofactor.

The enzyme catalyses 5-phospho-beta-D-ribosylamine + glycine + ATP = N(1)-(5-phospho-beta-D-ribosyl)glycinamide + ADP + phosphate + H(+). It participates in purine metabolism; IMP biosynthesis via de novo pathway; N(1)-(5-phospho-D-ribosyl)glycinamide from 5-phospho-alpha-D-ribose 1-diphosphate: step 2/2. This Methanococcus maripaludis (strain C7 / ATCC BAA-1331) protein is Phosphoribosylamine--glycine ligase.